Here is a 129-residue protein sequence, read N- to C-terminus: M-zodatoxin-Lt8f (129 aa).

An N-terminal signal peptide occupies residues 1-20; that stretch reads MKYFVVALALVAAFACIAES. The propeptide occupies 21-60; sequence KPAESEHELAEVEEENELADLEDAVWLEHLADLSDLEEAR. Positions 57–60 match the Processing quadruplet motif motif; sequence EEAR.

Post-translationally, cleavage of the propeptide depends on the processing quadruplet motif (XXXR, with at least one of X being E). As to expression, expressed by the venom gland.

The protein resides in the secreted. Insecticidal, cytolytic and antimicrobial peptide. Has insecticidal activity against the flesh fly S.carnaria. Has antibacterial activity against the Gram-negative bacteria E.coli. Forms voltage-dependent, ion-permeable channels in membranes. At high concentration causes cell membrane lysis. The sequence is that of M-zodatoxin-Lt8f (cit 1-7) from Lachesana tarabaevi (Spider).